The primary structure comprises 190 residues: Crossover junction endodeoxyribonuclease RuvC (190 aa).

Catalysis depends on residues Asp8, Glu67, and Asp139. Asp8, Glu67, and Asp139 together coordinate Mg(2+).

Belongs to the RuvC family. Homodimer which binds Holliday junction (HJ) DNA. The HJ becomes 2-fold symmetrical on binding to RuvC with unstacked arms; it has a different conformation from HJ DNA in complex with RuvA. In the full resolvosome a probable DNA-RuvA(4)-RuvB(12)-RuvC(2) complex forms which resolves the HJ. It depends on Mg(2+) as a cofactor.

The protein resides in the cytoplasm. The enzyme catalyses Endonucleolytic cleavage at a junction such as a reciprocal single-stranded crossover between two homologous DNA duplexes (Holliday junction).. Functionally, the RuvA-RuvB-RuvC complex processes Holliday junction (HJ) DNA during genetic recombination and DNA repair. Endonuclease that resolves HJ intermediates. Cleaves cruciform DNA by making single-stranded nicks across the HJ at symmetrical positions within the homologous arms, yielding a 5'-phosphate and a 3'-hydroxyl group; requires a central core of homology in the junction. The consensus cleavage sequence is 5'-(A/T)TT(C/G)-3'. Cleavage occurs on the 3'-side of the TT dinucleotide at the point of strand exchange. HJ branch migration catalyzed by RuvA-RuvB allows RuvC to scan DNA until it finds its consensus sequence, where it cleaves and resolves the cruciform DNA. The protein is Crossover junction endodeoxyribonuclease RuvC of Pasteurella multocida (strain Pm70).